Consider the following 644-residue polypeptide: Threonine--tRNA ligase (644 aa).

A TGS domain is found at 8–70 (VKAMVITLRD…EEDGELEILT (63 aa)). A catalytic region spans residues 251–541 (DHRKLGKELD…LTEHFAGAFP (291 aa)). The Zn(2+) site is built by Cys342, His393, and His518.

The protein belongs to the class-II aminoacyl-tRNA synthetase family. Homodimer. The cofactor is Zn(2+).

The protein localises to the cytoplasm. It catalyses the reaction tRNA(Thr) + L-threonine + ATP = L-threonyl-tRNA(Thr) + AMP + diphosphate + H(+). In terms of biological role, catalyzes the attachment of threonine to tRNA(Thr) in a two-step reaction: L-threonine is first activated by ATP to form Thr-AMP and then transferred to the acceptor end of tRNA(Thr). Also edits incorrectly charged L-seryl-tRNA(Thr). This Caldanaerobacter subterraneus subsp. tengcongensis (strain DSM 15242 / JCM 11007 / NBRC 100824 / MB4) (Thermoanaerobacter tengcongensis) protein is Threonine--tRNA ligase.